The following is a 351-amino-acid chain: MRKIIHVDMDCFFAAVEMRDNPALRDIPIAIGGSRERRGVISTANYPARQFGVRSAMPTAMALKLCPHLTLLPGRFVAYKEASRHVRDIFSRYTSLIEPLSLDEAWLDVTDSPHCYGSATLIAREIRQTIFNELQLTASAGVAPVKFLAKIASDLNKPNGQYVITPADVPGFLKTLPLAKIPGVGKVSAAKLENMGLRTCGDIQQCDLAMLLKRFGKFGRVLWERSQGIDERDVNSERLRKSVGVERTLAEDIHEWSDCEAIIEHLYPELERRLAIVKPDLLIARQGVKLKFNDFQQTTQEHVWPQLNKEDLIITARKTWNERRGERGVRLVGLHVTLLDPQLERQLVLGL.

Residues 4–185 (IIHVDMDCFF…LPLAKIPGVG (182 aa)) form the UmuC domain. Mg(2+) contacts are provided by aspartate 8 and aspartate 103. Glutamate 104 is an active-site residue.

Belongs to the DNA polymerase type-Y family. Monomer. Mg(2+) is required as a cofactor.

It is found in the cytoplasm. It carries out the reaction DNA(n) + a 2'-deoxyribonucleoside 5'-triphosphate = DNA(n+1) + diphosphate. Poorly processive, error-prone DNA polymerase involved in untargeted mutagenesis. Copies undamaged DNA at stalled replication forks, which arise in vivo from mismatched or misaligned primer ends. These misaligned primers can be extended by PolIV. Exhibits no 3'-5' exonuclease (proofreading) activity. May be involved in translesional synthesis, in conjunction with the beta clamp from PolIII. The sequence is that of DNA polymerase IV from Salmonella choleraesuis (strain SC-B67).